Reading from the N-terminus, the 129-residue chain is D-ribose pyranase (129 aa).

H20 acts as the Proton donor in catalysis. Substrate-binding positions include D28, H96, and 118 to 120 (YAN).

Belongs to the RbsD / FucU family. RbsD subfamily. Homodecamer.

Its subcellular location is the cytoplasm. It catalyses the reaction beta-D-ribopyranose = beta-D-ribofuranose. It participates in carbohydrate metabolism; D-ribose degradation; D-ribose 5-phosphate from beta-D-ribopyranose: step 1/2. Functionally, catalyzes the interconversion of beta-pyran and beta-furan forms of D-ribose. This chain is D-ribose pyranase, found in Shouchella clausii (strain KSM-K16) (Alkalihalobacillus clausii).